The chain runs to 197 residues: Glycerol-3-phosphate acyltransferase (197 aa).

A run of 5 helical transmembrane segments spans residues 7–27, 56–76, 82–102, 116–136, and 157–177; these read PSIAALIGYAFGSIPFGLLLT, LAALTLVLDLVKGFVPVWIAW, DIGWAALGAVVGHCFPIWLGF, FGLGWGIGLAYAFVWLVMLAI, and YFGRPTFVPPLVIIAVIIIWL.

It belongs to the PlsY family. Probably interacts with PlsX.

The protein localises to the cell inner membrane. The enzyme catalyses an acyl phosphate + sn-glycerol 3-phosphate = a 1-acyl-sn-glycero-3-phosphate + phosphate. The protein operates within lipid metabolism; phospholipid metabolism. Catalyzes the transfer of an acyl group from acyl-phosphate (acyl-PO(4)) to glycerol-3-phosphate (G3P) to form lysophosphatidic acid (LPA). This enzyme utilizes acyl-phosphate as fatty acyl donor, but not acyl-CoA or acyl-ACP. The sequence is that of Glycerol-3-phosphate acyltransferase from Erythrobacter litoralis (strain HTCC2594).